Here is a 32-residue protein sequence, read N- to C-terminus: Kappa-theraphotoxin-Gr2b (32 aa).

Disulfide bonds link Cys-2/Cys-16, Cys-9/Cys-21, and Cys-15/Cys-25.

The protein belongs to the neurotoxin 30 (phrixotoxin) family. As to expression, expressed by the venom gland.

Its subcellular location is the secreted. In terms of biological role, binds the voltage-sensor domain of the potassium channel KvAP (from the archaeon Aeropyrum pernix) and affects channel gating. The sequence is that of Kappa-theraphotoxin-Gr2b from Grammostola rosea (Chilean rose tarantula).